Consider the following 642-residue polypeptide: Influenza virus NS1A-binding protein homolog (642 aa).

The BTB domain occupies 32–99; that stretch reads CDVRLQVCGH…AYTAQLKADK (68 aa). Residues 134 to 233 enclose the BACK domain; sequence CISYRNFASC…YYSADHKLLD (100 aa). Phosphoserine is present on residues Ser246, Ser277, Ser322, Ser336, and Ser338. Positions 257 to 281 are disordered; the sequence is KPPRENGHKQISGSSTGCLSSPNAS. Residues 265–281 are compositionally biased toward polar residues; sequence KQISGSSTGCLSSPNAS. Kelch repeat units lie at residues 369–415, 416–463, 465–512, 513–559, 561–606, and 608–642; these read KLIA…VLMG, QLYV…ALNG, LYIV…ELGG, YLYI…VLDG, LFVG…TVGN, and IYAV…IFQF.

This sequence belongs to the BTB-kelch protein family. In terms of assembly, homodimer; through the BTB domain. Interacts with AHR/Aryl hydrocarbon receptor. Interacts (via BACK domain) with pre-mRNA-binding protein HNRNPK; the interaction is direct. Interacts (via BACK domain) with splicing factor PTBP1; the interaction is direct. Interacts (via Kelch repeats) with RNA polymerase POLR2A (via C-terminal domain). Interacts (via BACK domain) with splicing factor SNRPA; the interaction is indirect. Interacts (via Kelch repeats) with splicing factor SART1. Interacts (via BACK domain) with ALYREF; the interaction is indirect and likely plays a role in mRNA nuclear export. Interacts (via Kelch repeats) with KLHL20 (via Kelch repeats); this interaction blocks the assembly of Cul3-KLHL20 complex. In terms of tissue distribution, ubiquitous expression. In the heart, the highest expression is detected in the ventricles and the lowest in the atria. Expressed in dendrites and spines in neurons.

The protein localises to the cytoplasm. It localises to the cytoskeleton. It is found in the nucleus. Involved in many cell functions, including pre-mRNA splicing, the aryl hydrocarbon receptor (AHR) pathway, F-actin organization and protein ubiquitination. Plays a role in the dynamic organization of the actin skeleton as a stabilizer of actin filaments by association with F-actin through Kelch repeats. Protects cells from cell death induced by actin destabilization. Functions as a modifier of the AHR/Aryl hydrocarbon receptor pathway increasing the concentration of AHR available to activate transcription. In addition, functions as a negative regulator of BCR(KLHL20) E3 ubiquitin ligase complex to prevent ubiquitin-mediated proteolysis of PML and DAPK1, two tumor suppressors. Inhibits pre-mRNA splicing (in vitro). May play a role in mRNA nuclear export. In terms of biological role, may play a role in cell cycle progression in the nucleus. The chain is Influenza virus NS1A-binding protein homolog from Mus musculus (Mouse).